The chain runs to 186 residues: Elongation factor P (186 aa).

Belongs to the elongation factor P family.

It localises to the cytoplasm. It functions in the pathway protein biosynthesis; polypeptide chain elongation. Involved in peptide bond synthesis. Stimulates efficient translation and peptide-bond synthesis on native or reconstituted 70S ribosomes in vitro. Probably functions indirectly by altering the affinity of the ribosome for aminoacyl-tRNA, thus increasing their reactivity as acceptors for peptidyl transferase. This is Elongation factor P from Laribacter hongkongensis (strain HLHK9).